The sequence spans 207 residues: Ras-related protein RABH1e (207 aa).

16-23 (GDQSVGKT) is a binding site for GTP. The Effector region signature appears at 38-46 (YQATIGIDF). GTP is bound by residues 64-68 (DTAGQ), 122-125 (NKTD), and 152-153 (SA). Residues Cys205 and Cys207 are each lipidated (S-geranylgeranyl cysteine). The residue at position 207 (Cys207) is a Cysteine methyl ester.

The protein belongs to the small GTPase superfamily. Rab family.

The protein resides in the golgi apparatus membrane. Its function is as follows. Protein transport. Regulator of membrane traffic from the Golgi apparatus towards the endoplasmic reticulum (ER). This is Ras-related protein RABH1e (RABH1E) from Arabidopsis thaliana (Mouse-ear cress).